The primary structure comprises 192 residues: Peptidyl-prolyl cis-trans isomerase 1 (192 aa).

The 164-residue stretch at Phe25 to Glu188 folds into the PPIase cyclophilin-type domain.

This sequence belongs to the cyclophilin-type PPIase family.

The catalysed reaction is [protein]-peptidylproline (omega=180) = [protein]-peptidylproline (omega=0). PPIases accelerate the folding of proteins. It catalyzes the cis-trans isomerization of proline imidic peptide bonds in oligopeptides. The protein is Peptidyl-prolyl cis-trans isomerase 1 (cyn-1) of Caenorhabditis elegans.